The sequence spans 476 residues: Bifunctional protein GlmU (476 aa).

The segment at 1-232 (MDNLAAIILA…PVEVMGINDR (232 aa)) is pyrophosphorylase. UDP-N-acetyl-alpha-D-glucosamine is bound by residues 9 to 12 (LAAG), lysine 23, glutamine 75, and 80 to 81 (GT). Aspartate 105 lines the Mg(2+) pocket. The UDP-N-acetyl-alpha-D-glucosamine site is built by glycine 142, glutamate 157, asparagine 172, and asparagine 230. Position 230 (asparagine 230) interacts with Mg(2+). The interval 233-253 (VQLAEAARHARRRIAEEHMLN) is linker. The tract at residues 254–476 (GVTLVDPAAT…EGWKLRKRDQ (223 aa)) is N-acetyltransferase. 2 residues coordinate UDP-N-acetyl-alpha-D-glucosamine: arginine 353 and lysine 371. The active-site Proton acceptor is histidine 383. Positions 386 and 397 each coordinate UDP-N-acetyl-alpha-D-glucosamine. Acetyl-CoA is bound by residues 406–407 (NY), serine 425, alanine 443, and arginine 460.

The protein in the N-terminal section; belongs to the N-acetylglucosamine-1-phosphate uridyltransferase family. This sequence in the C-terminal section; belongs to the transferase hexapeptide repeat family. As to quaternary structure, homotrimer. It depends on Mg(2+) as a cofactor.

The protein localises to the cytoplasm. It carries out the reaction alpha-D-glucosamine 1-phosphate + acetyl-CoA = N-acetyl-alpha-D-glucosamine 1-phosphate + CoA + H(+). The catalysed reaction is N-acetyl-alpha-D-glucosamine 1-phosphate + UTP + H(+) = UDP-N-acetyl-alpha-D-glucosamine + diphosphate. Its pathway is nucleotide-sugar biosynthesis; UDP-N-acetyl-alpha-D-glucosamine biosynthesis; N-acetyl-alpha-D-glucosamine 1-phosphate from alpha-D-glucosamine 6-phosphate (route II): step 2/2. The protein operates within nucleotide-sugar biosynthesis; UDP-N-acetyl-alpha-D-glucosamine biosynthesis; UDP-N-acetyl-alpha-D-glucosamine from N-acetyl-alpha-D-glucosamine 1-phosphate: step 1/1. It participates in bacterial outer membrane biogenesis; LPS lipid A biosynthesis. In terms of biological role, catalyzes the last two sequential reactions in the de novo biosynthetic pathway for UDP-N-acetylglucosamine (UDP-GlcNAc). The C-terminal domain catalyzes the transfer of acetyl group from acetyl coenzyme A to glucosamine-1-phosphate (GlcN-1-P) to produce N-acetylglucosamine-1-phosphate (GlcNAc-1-P), which is converted into UDP-GlcNAc by the transfer of uridine 5-monophosphate (from uridine 5-triphosphate), a reaction catalyzed by the N-terminal domain. This is Bifunctional protein GlmU from Geobacter sulfurreducens (strain ATCC 51573 / DSM 12127 / PCA).